The primary structure comprises 227 residues: MKKLVNLVSGGADSATVLAIAQKMGYEIYAMSFNYGQRNNAELRKVRELVKEYNVKQHKIVNIDLRAFSGSALTDNNISVPHYHDVNELPDDVPVTYVPARNTIFLSYALGFAEVIGAKDIFIGVHTSDSANYPDCRPEYIKSFEEMANLATNMGVQGKKITIHTPLIDMTKEQIIRTGLELGVDYKNTISCYEPTEDDLSCGTCLACMIRLDAFKKNDIQDPIKYV.

8 to 18 (VSGGADSATVL) is an ATP binding site. The Zn(2+) site is built by Cys192, Cys202, Cys205, and Cys208.

Belongs to the QueC family. Zn(2+) serves as cofactor.

It carries out the reaction 7-carboxy-7-deazaguanine + NH4(+) + ATP = 7-cyano-7-deazaguanine + ADP + phosphate + H2O + H(+). It functions in the pathway purine metabolism; 7-cyano-7-deazaguanine biosynthesis. Its function is as follows. Catalyzes the ATP-dependent conversion of 7-carboxy-7-deazaguanine (CDG) to 7-cyano-7-deazaguanine (preQ(0)). The chain is 7-cyano-7-deazaguanine synthase from Rickettsia canadensis (strain McKiel).